Here is a 66-residue protein sequence, read N- to C-terminus: Large ribosomal subunit protein uL29 (66 aa).

The protein belongs to the universal ribosomal protein uL29 family.

This Ruegeria pomeroyi (strain ATCC 700808 / DSM 15171 / DSS-3) (Silicibacter pomeroyi) protein is Large ribosomal subunit protein uL29.